Reading from the N-terminus, the 822-residue chain is Calpain-3 (822 aa).

The segment at 1 to 36 (MPTVISASVAPRTGAEPRSPGPIAQAAQGKGTEAGG) is disordered. The Calpain catalytic domain occupies 74 to 418 (LFVDPEFPPD…FTKLEICNLT (345 aa)). Catalysis depends on residues Cys129, His335, and Asn359. Residues 419–587 (ADALESDKLQ…KRNLSEEVEN (169 aa)) form a domain III region. The interval 588–649 (TISVDRPVKK…LKPGNIDQES (62 aa)) is linker. The disordered stretch occupies residues 600–651 (PKPIIFGSDRANSNKELGVDQESEEGKDNTSPDKQAKSPQLKPGNIDQESKE). Over residues 623 to 635 (EEGKDNTSPDKQA) the composition is skewed to basic and acidic residues. 4 EF-hand domains span residues 650-684 (KEQRQFRNIFRQIAGDDMEICADELKNVLNRVVNK), 693-726 (FTLESCRSMIALMDTDGSGRLNLQEFHHLWKKIK), 723-758 (KKIKTWQKIFKHYDTDQSGTINSYEMRNAVNDAGFH), and 788-822 (VRLEGMFRAFNAFDKDGDGIIKLNVLEWLQLTMYA). The segment at 650–822 (KEQRQFRNIF…LEWLQLTMYA (173 aa)) is domain IV. Ca(2+)-binding residues include Ala663, Asp666, Glu668, Glu673, Asp706, Asp708, Ser710, Arg712, Glu717, Asp736, Asp738, Ser740, Thr742, Glu747, Asp801, Asp803, Asp805, and Ile807.

It belongs to the peptidase C2 family. Homodimer; via EF-hand domain 4. Interacts with TTN/titin. Interacts with CMYA5; this interaction, which results in CMYA5 proteolysis, may protect CAPN3 from autolysis. Interacts with SIMC1. Interacts with UTP25; the interaction is required for CAPN3 translocation to the nucleolus. Skeletal muscle.

Its subcellular location is the cytoplasm. It localises to the nucleus. It is found in the nucleolus. It carries out the reaction Broad endopeptidase activity.. With respect to regulation, activated by micromolar concentrations of calcium and inhibited by calpastatin. Calcium-regulated non-lysosomal thiol-protease. Proteolytically cleaves CTBP1. Mediates, with UTP25, the proteasome-independent degradation of p53/TP53. This is Calpain-3 (CAPN3) from Ovis aries (Sheep).